A 465-amino-acid polypeptide reads, in one-letter code: 3-isopropylmalate dehydratase large subunit (465 aa).

3 residues coordinate [4Fe-4S] cluster: cysteine 347, cysteine 407, and cysteine 410.

The protein belongs to the aconitase/IPM isomerase family. LeuC type 1 subfamily. Heterodimer of LeuC and LeuD. [4Fe-4S] cluster serves as cofactor.

The catalysed reaction is (2R,3S)-3-isopropylmalate = (2S)-2-isopropylmalate. It functions in the pathway amino-acid biosynthesis; L-leucine biosynthesis; L-leucine from 3-methyl-2-oxobutanoate: step 2/4. In terms of biological role, catalyzes the isomerization between 2-isopropylmalate and 3-isopropylmalate, via the formation of 2-isopropylmaleate. This chain is 3-isopropylmalate dehydratase large subunit, found in Aeromonas salmonicida (strain A449).